A 121-amino-acid polypeptide reads, in one-letter code: Small ribosomal subunit protein uS13 (121 aa).

Positions 94-121 (GLPMRGQRTRTNARTRKGPRKAAAALKK) are disordered.

Belongs to the universal ribosomal protein uS13 family. As to quaternary structure, part of the 30S ribosomal subunit. Forms a loose heterodimer with protein S19. Forms two bridges to the 50S subunit in the 70S ribosome.

Functionally, located at the top of the head of the 30S subunit, it contacts several helices of the 16S rRNA. In the 70S ribosome it contacts the 23S rRNA (bridge B1a) and protein L5 of the 50S subunit (bridge B1b), connecting the 2 subunits; these bridges are implicated in subunit movement. Contacts the tRNAs in the A and P-sites. The sequence is that of Small ribosomal subunit protein uS13 from Polaromonas sp. (strain JS666 / ATCC BAA-500).